The chain runs to 91 residues: Elongation factor 1-beta (91 aa).

Belongs to the EF-1-beta/EF-1-delta family.

Its function is as follows. Promotes the exchange of GDP for GTP in EF-1-alpha/GDP, thus allowing the regeneration of EF-1-alpha/GTP that could then be used to form the ternary complex EF-1-alpha/GTP/AAtRNA. The chain is Elongation factor 1-beta from Thermococcus kodakarensis (strain ATCC BAA-918 / JCM 12380 / KOD1) (Pyrococcus kodakaraensis (strain KOD1)).